The sequence spans 173 residues: Crossover junction endodeoxyribonuclease RuvC (173 aa).

Residues D8, E67, and D139 contribute to the active site. D8, E67, and D139 together coordinate Mg(2+).

It belongs to the RuvC family. In terms of assembly, homodimer which binds Holliday junction (HJ) DNA. The HJ becomes 2-fold symmetrical on binding to RuvC with unstacked arms; it has a different conformation from HJ DNA in complex with RuvA. In the full resolvosome a probable DNA-RuvA(4)-RuvB(12)-RuvC(2) complex forms which resolves the HJ. Mg(2+) serves as cofactor.

It is found in the cytoplasm. The catalysed reaction is Endonucleolytic cleavage at a junction such as a reciprocal single-stranded crossover between two homologous DNA duplexes (Holliday junction).. In terms of biological role, the RuvA-RuvB-RuvC complex processes Holliday junction (HJ) DNA during genetic recombination and DNA repair. Endonuclease that resolves HJ intermediates. Cleaves cruciform DNA by making single-stranded nicks across the HJ at symmetrical positions within the homologous arms, yielding a 5'-phosphate and a 3'-hydroxyl group; requires a central core of homology in the junction. The consensus cleavage sequence is 5'-(A/T)TT(C/G)-3'. Cleavage occurs on the 3'-side of the TT dinucleotide at the point of strand exchange. HJ branch migration catalyzed by RuvA-RuvB allows RuvC to scan DNA until it finds its consensus sequence, where it cleaves and resolves the cruciform DNA. This Enterobacter sp. (strain 638) protein is Crossover junction endodeoxyribonuclease RuvC.